The chain runs to 623 residues: Protein FAM234B (623 aa).

The tract at residues 1-82 (MATVLSRALK…TSERAPEGYP (82 aa)) is disordered. Residues 104-124 (AVFLLTVVISMILVLVCAFLI) traverse the membrane as a helical segment.

The protein belongs to the FAM234 family.

It is found in the membrane. It localises to the golgi outpost. Its subcellular location is the cytoplasm. The protein resides in the cytoskeleton. The protein localises to the microtubule organizing center. The protein is Protein FAM234B (FAM234B) of Gallus gallus (Chicken).